The primary structure comprises 440 residues: MDMQESQQLGMFGESELMSVGMDTFIHRIDSTEVIYQPRRKRAKLIGKYLMGDLLGEGSYGKVKEMLDSETLCRRAVKILKKKKLRRIPNGEANVKKEIQLLRRLRHKNVIQLVDVLYNEEKQKMYMVMEYCVCGMQEMLDSVPEKRFPVFQAHGYFCQLIDGLEYLHSQGIVHKDIKPGNLLLTTNGTLKISDLGVAEALHPFAEDDTCRTSQGSPAFQPPEIANGLDTFSGFKVDIWSAGVTLYNITTGLYPFEGDNIYKLFENIGKGDFTIPEDCGPPLSDLLRGMLEYDPAKRFSIQQIRQHNWFRKKHAQAETLVPIPPSPETKDKWRSMTAVPYLEDLHGYNEDEDDDLYDIEDDIIYTQDFTVPGQVPEEEAGQNGQSRGRGLPKAICMNGTEPGQLSTKSKAERRASASSNPSRKACSASSKIRKLSTCKQQ.

A Protein kinase domain is found at 49-309; that stretch reads YLMGDLLGEG…IQQIRQHNWF (261 aa). ATP contacts are provided by residues 55-63 and Lys-78; that span reads LGEGSYGKV. Asp-176 functions as the Proton acceptor in the catalytic mechanism. Phosphothreonine; by autocatalysis occurs at positions 336 and 365. The interval 370-440 is disordered; the sequence is VPGQVPEEEA…IRKLSTCKQQ (71 aa). A compositionally biased stretch (basic residues) spans 430–440; sequence KIRKLSTCKQQ. At Ser-435 the chain carries Phosphoserine; by PKA.

It belongs to the protein kinase superfamily. CAMK Ser/Thr protein kinase family. LKB1 subfamily. In terms of assembly, catalytic component of a trimeric complex composed of STK11/LKB1, STRAD (STRADA or STRADB) and CAB39/MO25 (CAB39/MO25alpha or CAB39L/MO25beta). Mg(2+) serves as cofactor. It depends on Mn(2+) as a cofactor. Ubiquitously expressed in all tissues tested. High levels were observed in duodenum and skeletal muscle, lower levels in liver and pancreas.

It localises to the nucleus. The protein resides in the cytoplasm. The catalysed reaction is L-seryl-[protein] + ATP = O-phospho-L-seryl-[protein] + ADP + H(+). The enzyme catalyses L-threonyl-[protein] + ATP = O-phospho-L-threonyl-[protein] + ADP + H(+). Tumor suppressor serine/threonine-protein kinase that controls the activity of AMP-activated protein kinase (AMPK) family members, thereby playing a role in various processes such as cell metabolism, cell polarity, apoptosis and DNA damage response. Acts by phosphorylating the T-loop of AMPK family proteins, leading to promote their activity. In Gallus gallus (Chicken), this protein is Serine/threonine-protein kinase STK11.